The primary structure comprises 310 residues: MVAAIRVPRSQRAKRELLKHAPKLVETGKKTLILHGTKTSAVLNSVLADLFHLKRDNAVKYSKKNDNIRPFESGGETSLEFFSLKTDCSLIVYGSHSKKRPNNLVLGRTYDHHIYDLVEVGVENYKSIESYVYDKKLAPKLGSKPFFAFIGEHFESVEELKHLKEVLLDLFKGEVVENLNLAGVDRVFVCTAISPTTVYMMHCALRLKRSGTSIPRIELVEVGPSMDLVVRRHRYPVESLKKEAMKTADHAKKMKNVTKDPVHGKLGKVYIPDQQIAKMSLSNDVKGLKRERREAKKNKDHSKKQKINPE.

The 211-residue stretch at K29 to S239 folds into the Brix domain. The tract at residues L281–E310 is disordered. The segment covering A295–E310 has biased composition (basic residues).

This sequence belongs to the RPF2 family.

It localises to the nucleus. The protein localises to the nucleolus. In Oryza sativa subsp. japonica (Rice), this protein is Ribosome production factor 2 homolog.